We begin with the raw amino-acid sequence, 320 residues long: ATP-dependent 6-phosphofructokinase (320 aa).

An ATP-binding site is contributed by glycine 12. 22 to 26 provides a ligand contact to ADP; sequence RGVVR. ATP contacts are provided by residues 73–74 and 103–106; these read RF and GDGS. Mg(2+) is bound at residue aspartate 104. Substrate is bound at residue 126-128; the sequence is TID. Aspartate 128 (proton acceptor) is an active-site residue. ADP is bound at residue arginine 155. Substrate contacts are provided by residues arginine 163 and 170-172; that span reads MGR. Residues 186–188, lysine 212, and 214–216 each bind ADP; these read GCE and KKH. Substrate contacts are provided by residues glutamate 223, arginine 244, and 250 to 253; that span reads HIQR.

This sequence belongs to the phosphofructokinase type A (PFKA) family. ATP-dependent PFK group I subfamily. Prokaryotic clade 'B1' sub-subfamily. As to quaternary structure, homotetramer. Mg(2+) is required as a cofactor.

Its subcellular location is the cytoplasm. The enzyme catalyses beta-D-fructose 6-phosphate + ATP = beta-D-fructose 1,6-bisphosphate + ADP + H(+). It participates in carbohydrate degradation; glycolysis; D-glyceraldehyde 3-phosphate and glycerone phosphate from D-glucose: step 3/4. With respect to regulation, allosterically activated by ADP and other diphosphonucleosides, and allosterically inhibited by phosphoenolpyruvate. Functionally, catalyzes the phosphorylation of D-fructose 6-phosphate to fructose 1,6-bisphosphate by ATP, the first committing step of glycolysis. The sequence is that of ATP-dependent 6-phosphofructokinase from Vibrio campbellii (strain ATCC BAA-1116).